The following is a 223-amino-acid chain: TMF-regulated nuclear protein 1 (223 aa).

Disordered stretches follow at residues 1-84 and 196-223; these read MPGC…GPAG and GRLR…SPQR. Residues 21 to 54 are compositionally biased toward pro residues; the sequence is GSPPPPPREPLPSLQPPSPSPTSTPTPTKSPPLP. Residues 73-84 show a composition bias toward gly residues; it reads ASGGSGGAGPAG.

As to quaternary structure, interacts with TMF1; may regulate TRNP1 proteasomal degradation. Post-translationally, ubiquitinated, leading to its degradation by the proteasome. In terms of tissue distribution, expressed in brain and kidney (at protein level). Also detected in spleen and intestine.

The protein resides in the nucleus. Functionally, DNA-binding factor that regulates the expression of a subset of genes and plays a key role in tangential, radial, and lateral expansion of the brain neocortex. Regulates neural stem cells proliferation and the production of intermediate neural progenitors and basal radial glial cells affecting the process of cerebral cortex gyrification. May control the proliferation rate of cells by regulating their progression through key cell-cycle transition points. The chain is TMF-regulated nuclear protein 1 (Trnp1) from Mus musculus (Mouse).